We begin with the raw amino-acid sequence, 540 residues long: Phenylalanine--tRNA ligase beta subunit (540 aa).

A B5 domain is found at 266–342 (LRPEKRTVSV…IAYGYDKIET (77 aa)). Residues D320, D326, E329, and D330 each coordinate Mg(2+).

The protein belongs to the phenylalanyl-tRNA synthetase beta subunit family. Type 2 subfamily. As to quaternary structure, tetramer of two alpha and two beta subunits. It depends on Mg(2+) as a cofactor.

It is found in the cytoplasm. The enzyme catalyses tRNA(Phe) + L-phenylalanine + ATP = L-phenylalanyl-tRNA(Phe) + AMP + diphosphate + H(+). This Methanocorpusculum labreanum (strain ATCC 43576 / DSM 4855 / Z) protein is Phenylalanine--tRNA ligase beta subunit.